The following is a 117-amino-acid chain: Hainantoxin-XV-5 (117 aa).

An N-terminal signal peptide occupies residues 1–20; sequence MKLCAVIIASLLVCVAVASS. The tract at residues 20 to 55 is disordered; the sequence is SSDNQKEFAQEKEMTREETQSLGEHEKDDEVTGSEE. Positions 21–56 are excised as a propeptide; sequence SDNQKEFAQEKEMTREETQSLGEHEKDDEVTGSEER. Residues 23-55 are compositionally biased toward basic and acidic residues; it reads NQKEFAQEKEMTREETQSLGEHEKDDEVTGSEE. Intrachain disulfides connect cysteine 58/cysteine 72, cysteine 65/cysteine 78, cysteine 69/cysteine 115, and cysteine 71/cysteine 91.

Belongs to the neurotoxin 03 (Tx2) family. 02 subfamily. HNTX-XV sub-subfamily. As to expression, expressed by the venom gland.

It is found in the secreted. Putative ion channel inhibitor. In Cyriopagopus hainanus (Chinese bird spider), this protein is Hainantoxin-XV-5.